Reading from the N-terminus, the 293-residue chain is SAGA-associated factor 29 (293 aa).

Positions 12 to 88 form a coiled coil; that stretch reads ELLAELQRLL…KALDKIAEIK (77 aa). In terms of domain architecture, SGF29 C-terminal spans 152–293; the sequence is GDYVAKPGDK…VVACKETKKK (142 aa). 2 histone H3K4me3 N-terminus binding regions span residues 194–196 and 240–243; these read DID and QTTC. The interval 264–266 is histone H3K4me3 binding; the sequence is FED.

It belongs to the SGF29 family. As to quaternary structure, interacts with dimethylated and trimethylated 'Lys-4' of histone H3 (H3K4me2 and H3K4me3), with a preference for the trimethylated form (H3K4me3). Component of some SAGA-type complexes. Component of the ADA2A-containing complex (ATAC).

It is found in the nucleus. In terms of biological role, chromatin reader component of some histone acetyltransferase (HAT) SAGA-type complexes like the TFTC-HAT, ATAC or STAGA complexes. SGF29 specifically recognizes and binds methylated 'Lys-4' of histone H3 (H3K4me), with a preference for trimethylated form (H3K4me3). In the SAGA-type complexes, SGF29 is required to recruit complexes to H3K4me. Also binds non-histone proteins that are methylated on Lys residues. This chain is SAGA-associated factor 29, found in Gallus gallus (Chicken).